The primary structure comprises 405 residues: Dematin (405 aa).

3 disordered regions span residues 1-29 (MERL…SPSS), 81-100 (SREC…PEVW), and 108-332 (IISQ…DRGN). A compositionally biased stretch (low complexity) spans 11-29 (SPGSVSSSRDSSVPGSPSS). Phosphoserine is present on residues serine 16, serine 18, serine 26, serine 92, serine 96, serine 110, and serine 113. Low complexity predominate over residues 113-124 (STPRTTGTPRTS). Threonine 114 carries the phosphothreonine modification. Phosphoserine occurs at positions 156 and 226. Over residues 216-228 (EEEEEEEDDDSEE) the composition is skewed to acidic residues. Positions 224-308 (DDSEEEIKAI…SRLQSTEFSP (85 aa)) are interaction with RASGRF2. 2 stretches are compositionally biased toward basic and acidic residues: residues 229-242 (EIKA…EELS) and 252-261 (ILKEEMEKSL). Residues serine 269, serine 279, serine 289, serine 303, serine 315, serine 333, serine 372, and serine 383 each carry the phosphoserine modification. Residues 277 to 292 (HTSLHSGTSKSSSLPS) show a composition bias toward low complexity. The segment covering 294–322 (GRTTLSRLQSTEFSPSGSEAGSPGLQNGE) has biased composition (polar residues). The HP domain occupies 337-405 (VLEQKIYPYE…NELKKKASLF (69 aa)). Position 403 is a phosphoserine; by PKA (serine 403).

It belongs to the villin/gelsolin family. As to quaternary structure, monomeric (isoform 2); under reducing conditions. Self-associates. Exists under oxidizing condition as a trimer of two isoforms 2 and isoform 1 linked by disulfide bonds. Found in a complex with DMTN, F-actin and spectrin. Found in a complex with ADD2, DMTN and SLC2A1. Interacts with F-actin, ITPKB and spectrin. Isoform 2 interacts with SLC2A1 (via C-terminus cytoplasmic region). Interacts with RASGRF2. Phosphorylated. Phosphorylation at Ser-403 by PKA causes the C-terminal headpiece domain to associate with the N-terminal core domain, and leads to the inhibition of its actin bundling activity. In terms of tissue distribution, expressed in platelets. Isoform 1 and isoform 2 are expressed in mature erythrocytes (at protein level).

The protein localises to the cytoplasm. The protein resides in the cytosol. It is found in the perinuclear region. It localises to the cytoskeleton. Its subcellular location is the cell membrane. The protein localises to the membrane. The protein resides in the endomembrane system. It is found in the cell projection. Membrane-cytoskeleton-associated protein with F-actin-binding activity that induces F-actin bundles formation and stabilization. Its F-actin-bundling activity is reversibly regulated upon its phosphorylation by the cAMP-dependent protein kinase A (PKA). Binds to the erythrocyte membrane glucose transporter-1 SLC2A1/GLUT1, and hence stabilizes and attaches the spectrin-actin network to the erythrocytic plasma membrane. Plays a role in maintaining the functional integrity of PKA-activated erythrocyte shape and the membrane mechanical properties. Also plays a role as a modulator of actin dynamics in fibroblasts; acts as a negative regulator of the RhoA activation pathway. In platelets, functions as a regulator of internal calcium mobilization across the dense tubular system that affects platelet granule secretion pathways and aggregation. Also required for the formation of a diverse set of cell protrusions, such as filopodia and lamellipodia, necessary for platelet cell spreading, motility and migration. Acts as a tumor suppressor and inhibits malignant cell transformation. This is Dematin (Dmtn) from Mus musculus (Mouse).